We begin with the raw amino-acid sequence, 580 residues long: Probable inositol transporter 2 (580 aa).

12 helical membrane passes run 36 to 56, 71 to 91, 106 to 126, 129 to 149, 156 to 176, 189 to 209, 275 to 295, 315 to 335, 343 to 363, 452 to 472, 490 to 510, and 521 to 541; these read GIGGLLFGYDTGVISGALLYI, EMIVSMAVAGAIVGAAIGGWA, FLFLLGAIIMAAAPNPSLLVV, VFVGLGVGMASMTAPLYISEA, GALVSTNGFLITGGQFLSYLI, WMLGIAGIPALLQFVLMFTLP, GLIAGVGLQVFQQFVGINTVM, LLSLVTAGLNAFGSIISIYFI, LLIISLFGVIISLGILTGVFY, FGWFALLGLGLYIIFFSPGMG, ICGGIAATANWISNLIVAQSF, and WTFLIFGVISVIALLFVMVCV.

It belongs to the major facilitator superfamily. Sugar transporter (TC 2.A.1.1) family. In terms of tissue distribution, expressed in the tapetum, but not in pollen grains. Detected in leaf vascular tissue and in roots.

It is found in the cell membrane. With respect to regulation, inhibited by nickel and to a lesser extent by cobalt. Its function is as follows. Plasma membrane inositol-proton symporter. Specific for several inositol epimers, such as myoinositol and scylloinositol. D-chiroinositol, mucoinositol, alloinositol and pinitol are also transported with a lower activity. Not active with galactinol and phytate. In Arabidopsis thaliana (Mouse-ear cress), this protein is Probable inositol transporter 2 (INT2).